Consider the following 529-residue polypeptide: Heat shock factor protein 1 (529 aa).

An N-acetylmethionine modification is found at M1. The DNA-binding domain stretch occupies residues 15 to 120 (VPAFLTKLWT…LLENIKRKVT (106 aa)). K80 carries the N6-acetyllysine modification. An N6-acetyllysine; alternate modification is found at K91. A Glycyl lysine isopeptide (Lys-Gly) (interchain with G-Cter in SUMO2); alternate cross-link involves residue K91. K118 carries the N6-acetyllysine modification. S121 is modified (phosphoserine; by MAPKAPK2). Glycyl lysine isopeptide (Lys-Gly) (interchain with G-Cter in SUMO2) cross-links involve residues K126 and K131. Residues 130-203 (IKIRQDSVTK…ISLVQSNRIL (74 aa)) form a hydrophobic repeat HR-A/B region. T142 carries the post-translational modification Phosphothreonine; by CK2. N6-acetyllysine occurs at positions 150 and 188. A d domain region spans residues 203–224 (LGVKRKIPLMLNDSGSAHSMPK). The residue at position 208 (K208) is an N6-acetyllysine; alternate. A Glycyl lysine isopeptide (Lys-Gly) (interchain with G-Cter in SUMO2); alternate cross-link involves residue K208. Phosphoserine; by PLK1 is present on S216. A regulatory domain region spans residues 221-310 (SMPKYSRQFS…PPSPPQSPRV (90 aa)). A Glycyl lysine isopeptide (Lys-Gly) (interchain with G-Cter in SUMO2) cross-link involves residue K224. Residue S230 is modified to Phosphoserine; by CAMK2A. Phosphoserine occurs at positions 275 and 292. The segment at 295-324 (VRVKEEPPSPPQSPRVEEASPGRPSSVDTL) is disordered. Residue K298 is modified to N6-acetyllysine; alternate. A Glycyl lysine isopeptide (Lys-Gly) (interchain with G-Cter in SUMO2); alternate cross-link involves residue K298. K298 is covalently cross-linked (Glycyl lysine isopeptide (Lys-Gly) (interchain with G-Cter in SUMO); alternate). S303 carries the post-translational modification Phosphoserine; by GSK3-beta. A Phosphoserine; by MAPK3 modification is found at S307. Phosphoserine is present on residues S314 and S319. S320 is subject to Phosphoserine; by PKA. Position 323 is a phosphothreonine (T323). The residue at position 326 (S326) is a Phosphoserine; by MAPK12. Residues 336–372 (RESEPAPASVTALTDARGHTDTEGRPPSPPPTSTPEK) are disordered. S344 bears the Phosphoserine mark. Residue S363 is modified to Phosphoserine; by MAPK8. The segment at 371–529 (EKCLSVACLD…PPKAKDPTVS (159 aa)) is transactivation domain. The tract at residues 384-409 (LSDHLDAMDSNLDNLQTMLSSHGFSV) is hydrophobic repeat HR-C. Residues 412–420 (SALLDLFSP) carry the 9aaTAD motif. At S419 the chain carries Phosphoserine; by PLK1. S444 carries the post-translational modification Phosphoserine. 2 disordered regions span residues 444–463 (SPQE…DSGK) and 502–529 (EGDG…PTVS). An N6-acetyllysine modification is found at K524.

The protein belongs to the HSF family. Monomer; cytoplasmic latent and transcriptionally inactive monomeric form in unstressed cells. Homotrimer; in response to stress, such as heat shock, homotrimerizes and translocates into the nucleus, binds to heat shock element (HSE) sequences in promoter of heat shock protein (HSP) genes and acquires transcriptional ability. Interacts (via monomeric form) with FKBP4; this interaction occurs in unstressed cells. Associates (via monomeric form) with HSP90 proteins in a multichaperone complex in unnstressed cell; this association maintains HSF1 in a non-DNA-binding and transcriptional inactive form by preventing HSF1 homotrimerization. Homotrimeric transactivation activity is modulated by protein-protein interactions and post-translational modifications. Interacts with HSP90AA1; this interaction is decreased in a IER5-dependent manner, promoting HSF1 accumulation in the nucleus, homotrimerization and DNA-binding activities. Part (via regulatory domain in the homotrimeric form) of a large heat shock-induced HSP90-dependent multichaperone complex at least composed of FKBP4, FKBP5, HSP90 proteins, PPID, PPP5C and PTGES3; this association maintains the HSF1 homotrimeric DNA-bound form in a transcriptionally inactive form. Interacts with BAG3 (via BAG domain); this interaction occurs in normal and heat-shocked cells promoting nuclear shuttling of HSF1 in a BAG3-dependent manner. Interacts (via homotrimeric and hyperphosphorylated form) with FKBP4; this interaction occurs upon heat shock in a HSP90-dependent multichaperone complex. Interacts (via homotrimeric form preferentially) with EEF1A proteins. In heat shocked cells, stress-denatured proteins compete with HSF1 homotrimeric DNA-bound form for association of the HSP90-dependent multichaperone complex, and hence alleviating repression of HSF1-mediated transcriptional activity. Interacts (via homotrimeric form preferentially) with DAXX; this interaction relieves homotrimeric HSF1 from repression of its transcriptional activity by HSP90-dependent multichaperone complex upon heat shock. Interacts (via D domain and preferentially with hyperphosphorylated form) with JNK1; this interaction occurs under both normal growth conditions and immediately upon heat shock. Interacts (via D domain and preferentially with hyperphosphorylated form) with MAPK3; this interaction occurs upon heat shock. Interacts with IER5 (via central region); this interaction promotes PPP2CA-induced dephosphorylation on Ser-121, Ser-307, Ser-314, Thr-323 and Thr-367 and HSF1 transactivation activity. Found in a ribonucleoprotein complex composed of the HSF1 homotrimeric form, translation elongation factor eEF1A proteins and non-coding RNA heat shock RNA-1 (HSR1); this complex occurs upon heat shock and stimulates HSF1 DNA-binding activity. Interacts (via transactivation domain) with HSPA1A/HSP70 and DNAJB1; these interactions result in the inhibition of heat shock- and HSF1-induced transcriptional activity during the attenuation and recovery phase from heat shock. Interacts (via Ser-303 and Ser-307 phosphorylated form) with YWHAE; this interaction promotes HSF1 sequestration in the cytoplasm in an ERK-dependent manner. Found in a complex with IER5 and PPP2CA. Interacts with TPR; this interaction increases upon heat shock and stimulates export of HSP70 mRNA. Interacts with SYMPK (via N-terminus) and CSTF2; these interactions occur upon heat shock. Interacts (via transactivation domain) with HSPA8. Interacts with EEF1D; this interaction occurs at heat shock promoter element (HSE) sequences. Interacts with MAPKAPK2. Interacts with PRKACA/PKA. Interacts (via transactivation domain) with GTF2A2. Interacts (via transactivation domain) with GTF2B. Interacts (via transactivation domain) with TBP. Interacts with CDK9, CCNT1 and EP300. Interacts (via N-terminus) with XRCC5 (via N-terminus) and XRCC6 (via N-terminus); these interactions are direct and prevent XRCC5/XRCC6 heterodimeric binding and non-homologous end joining (NHEJ) repair activities induced by ionizing radiation (IR). Interacts with PLK1; this interaction occurs during the early mitotic period, increases upon heat shock but does not modulate neither HSF1 homotrimerization and DNA-binding activities. Interacts (via Ser-216 phosphorylated form) with CDC20; this interaction occurs in mitosis in a MAD2L1-dependent manner and prevents PLK1-stimulated degradation of HSF1 by blocking the recruitment of the SCF(BTRC) ubiquitin ligase complex. Interacts with MAD2L1; this interaction occurs in mitosis. Interacts with BTRC; this interaction occurs during mitosis, induces its ubiquitin-dependent degradation following stimulus-dependent phosphorylation at Ser-216, a process inhibited by CDC20. Interacts with HSP90AA1 and HSP90AB1. Forms a complex with TTC5/STRAP and p300/EP300; these interactions augment chromatin-bound HSF1 and p300/EP300 histone acetyltransferase activity. Post-translationally, phosphorylated. Phosphorylated in unstressed cells; this phosphorylation is constitutive and implicated in the repression of HSF1 transcriptional activity. Phosphorylated on Ser-121 by MAPKAPK2; this phosphorylation promotes interaction with HSP90 proteins and inhibits HSF1 homotrimerization, DNA-binding and transactivation activities. Phosphorylation on Ser-303 by GSK3B/GSK3-beta and on Ser-307 by MAPK3 within the regulatory domain is involved in the repression of HSF1 transcriptional activity and occurs in a RAF1-dependent manner. Phosphorylation on Ser-303 and Ser-307 increases HSF1 nuclear export in a YWHAE- and XPO1/CRM1-dependent manner. Phosphorylation on Ser-307 is a prerequisite for phosphorylation on Ser-303. According to PubMed:9535852, Ser-303 is not phosphorylated in unstressed cells. Phosphorylated on Ser-419 by PLK1; phosphorylation promotes nuclear translocation upon heat shock. Hyperphosphorylated upon heat shock and during the attenuation and recovery phase period of the heat shock response. Phosphorylated on Thr-142; this phosphorylation increases HSF1 transactivation activity upon heat shock. Phosphorylation on Ser-230 by CAMK2A; this phosphorylation enhances HSF1 transactivation activity upon heat shock. Phosphorylation on Ser-326 by MAPK12; this phosphorylation enhances HSF1 nuclear translocation, homotrimerization and transactivation activities upon heat shock. Phosphorylated on Ser-320 by PRKACA/PKA; this phosphorylation promotes nuclear localization and transcriptional activity upon heat shock. Phosphorylated on Ser-363 by MAPK8; this phosphorylation occurs upon heat shock, induces HSF1 translocation into nuclear stress bodies and negatively regulates transactivation activity. Neither basal nor stress-inducible phosphorylation on Ser-230, Ser-292, Ser-303, Ser-307, Ser-314, Ser-319, Ser-320, Thr-323, Ser-326, Ser-338, Ser-344, Ser-363, Thr-367, Ser-368 and Thr-369 within the regulatory domain is involved in the regulation of HSF1 subcellular localization or DNA-binding activity; however, it negatively regulates HSF1 transactivation activity. Phosphorylated on Ser-216 by PLK1 in the early mitotic period; this phosphorylation regulates HSF1 localization to the spindle pole, the recruitment of the SCF(BTRC) ubiquitin ligase complex inducing HSF1 degradation, and hence mitotic progression. Dephosphorylated on Ser-121, Ser-307, Ser-314, Thr-323 and Thr-367 by phosphatase PPP2CA in an IER5-dependent manner, leading to HSF1-mediated transactivation activity. In terms of processing, sumoylated with SUMO1 and SUMO2 upon heat shock in a ERK2-dependent manner. Sumoylated by SUMO1 on Lys-298; sumoylation occurs upon heat shock and promotes its localization to nuclear stress bodies and DNA-binding activity. Phosphorylation on Ser-303 and Ser-307 is probably a prerequisite for sumoylation. Acetylated on Lys-118; this acetylation is decreased in a IER5-dependent manner. Acetylated on Lys-118, Lys-208 and Lys-298; these acetylations occur in a EP300-dependent manner. Acetylated on Lys-80; this acetylation inhibits DNA-binding activity upon heat shock. Deacetylated on Lys-80 by SIRT1; this deacetylation increases DNA-binding activity. Post-translationally, ubiquitinated by SCF(BTRC) and degraded following stimulus-dependent phosphorylation at Ser-216 by PLK1 in mitosis. Polyubiquitinated. Undergoes proteasomal degradation upon heat shock and during the attenuation and recovery phase period of the heat shock response.

Its subcellular location is the nucleus. The protein localises to the cytoplasm. It localises to the nucleoplasm. The protein resides in the perinuclear region. It is found in the cytoskeleton. Its subcellular location is the spindle pole. The protein localises to the microtubule organizing center. It localises to the centrosome. The protein resides in the chromosome. It is found in the centromere. Its subcellular location is the kinetochore. Its function is as follows. Functions as a stress-inducible and DNA-binding transcription factor that plays a central role in the transcriptional activation of the heat shock response (HSR), leading to the expression of a large class of molecular chaperones, heat shock proteins (HSPs), that protect cells from cellular insult damage. In unstressed cells, is present in a HSP90-containing multichaperone complex that maintains it in a non-DNA-binding inactivated monomeric form. Upon exposure to heat and other stress stimuli, undergoes homotrimerization and activates HSP gene transcription through binding to site-specific heat shock elements (HSEs) present in the promoter regions of HSP genes. Upon heat shock stress, forms a chromatin-associated complex with TTC5/STRAP and p300/EP300 to stimulate HSR transcription, therefore increasing cell survival. Activation is reversible, and during the attenuation and recovery phase period of the HSR, returns to its unactivated form. Binds to inverted 5'-NGAAN-3' pentamer DNA sequences. Binds to chromatin at heat shock gene promoters. Activates transcription of transcription factor FOXR1 which in turn activates transcription of the heat shock chaperones HSPA1A and HSPA6 and the antioxidant NADPH-dependent reductase DHRS2. Also serves several other functions independently of its transcriptional activity. Involved in the repression of Ras-induced transcriptional activation of the c-fos gene in heat-stressed cells. Positively regulates pre-mRNA 3'-end processing and polyadenylation of HSP70 mRNA upon heat-stressed cells in a symplekin (SYMPK)-dependent manner. Plays a role in nuclear export of stress-induced HSP70 mRNA. Plays a role in the regulation of mitotic progression. Also plays a role as a negative regulator of non-homologous end joining (NHEJ) repair activity in a DNA damage-dependent manner. Involved in stress-induced cancer cell proliferation in a IER5-dependent manner. (Microbial infection) Plays a role in latent human immunodeficiency virus (HIV-1) transcriptional reactivation. Binds to the HIV-1 long terminal repeat promoter (LTR) to reactivate viral transcription by recruiting cellular transcriptional elongation factors, such as CDK9, CCNT1 and EP300. This chain is Heat shock factor protein 1, found in Homo sapiens (Human).